The sequence spans 380 residues: Succinate--CoA ligase [ADP-forming] subunit beta (380 aa).

Residues arginine 9–arginine 237 enclose the ATP-grasp domain. ATP-binding positions include lysine 45, glycine 52–glycine 54, valine 94, and glutamate 99. Positions 192 and 206 each coordinate Mg(2+). Residues asparagine 257 and glycine 314 to threonine 316 each bind substrate.

Belongs to the succinate/malate CoA ligase beta subunit family. As to quaternary structure, heterotetramer of two alpha and two beta subunits. Mg(2+) serves as cofactor.

The catalysed reaction is succinate + ATP + CoA = succinyl-CoA + ADP + phosphate. The enzyme catalyses GTP + succinate + CoA = succinyl-CoA + GDP + phosphate. It functions in the pathway carbohydrate metabolism; tricarboxylic acid cycle; succinate from succinyl-CoA (ligase route): step 1/1. In terms of biological role, succinyl-CoA synthetase functions in the citric acid cycle (TCA), coupling the hydrolysis of succinyl-CoA to the synthesis of either ATP or GTP and thus represents the only step of substrate-level phosphorylation in the TCA. The beta subunit provides nucleotide specificity of the enzyme and binds the substrate succinate, while the binding sites for coenzyme A and phosphate are found in the alpha subunit. The polypeptide is Succinate--CoA ligase [ADP-forming] subunit beta (Chloroflexus aurantiacus (strain ATCC 29366 / DSM 635 / J-10-fl)).